A 262-amino-acid polypeptide reads, in one-letter code: Phosphatase SCO2771 (262 aa).

Its function is as follows. Displays phosphatase activity against p-nitrophenyl phosphate (pNPP) in vitro; however, the physiological substrate is unknown. The chain is Phosphatase SCO2771 from Streptomyces coelicolor (strain ATCC BAA-471 / A3(2) / M145).